The chain runs to 379 residues: RIB43A-like with coiled-coils protein 1 (379 aa).

The tract at residues 1-21 (MYNINQSTDTKEAAAIEARRN) is disordered. The span at 9 to 21 (DTKEAAAIEARRN) shows a compositional bias: basic and acidic residues. Coiled coils occupy residues 85–111 (ADRT…GREF), 161–241 (RYNL…KANL), and 280–304 (EQRA…QAEK).

It belongs to the RIB43A family. In terms of assembly, microtubule inner protein component of sperm flagellar doublet microtubules.

Its subcellular location is the cytoplasm. The protein localises to the cytoskeleton. The protein resides in the flagellum axoneme. The protein is RIB43A-like with coiled-coils protein 1 (RIBC1) of Macaca fascicularis (Crab-eating macaque).